The following is a 552-amino-acid chain: Tyrosine-protein kinase Src64B (552 aa).

One can recognise an SH3 domain in the interval 95 to 156 (VLKRVVVALY…PLNFVAEERS (62 aa)). One can recognise an SH2 domain in the interval 162–259 (WFFENVLRKE…GLCHILSRPC (98 aa)). Residues 284–537 (IQLLRKLGRG…TFEFLNHYFE (254 aa)) form the Protein kinase domain. ATP is bound by residues 290 to 298 (LGRGNFGEV) and K312. The active-site Proton acceptor is the D404. Residue Y434 is modified to Phosphotyrosine; by autocatalysis.

This sequence belongs to the protein kinase superfamily. Tyr protein kinase family. SRC subfamily. In terms of assembly, interacts with hzg. Phosphorylated. As to expression, after the first 8 hours of development, accumulates almost exclusively in neural tissues such as the brain, ventral nerve chord, and eye-antennal disks, and in differentiating smooth muscle.

The catalysed reaction is L-tyrosyl-[protein] + ATP = O-phospho-L-tyrosyl-[protein] + ADP + H(+). Its function is as follows. Tyrosine-protein kinase that may play a role in the development of neural tissue and smooth muscle. May contribute to tyrosine phosphorylation of Dscam1, a cell surface receptor involved in targeting of growing axons during eye morphogenesis. In Drosophila melanogaster (Fruit fly), this protein is Tyrosine-protein kinase Src64B (Src64B).